A 257-amino-acid polypeptide reads, in one-letter code: MKDPKAPIGVFDSGVGGLTVLKALRRLLPREEFLYFGDTARVPYGGKPLAMVRRFAWEIAGFLLRQGVKAIVVACNTASSAALPDLAEDLSVPVFGVVEPAARAARGFRKVGLIGTQATVESGAYPRYVDLAWAKACPLFVPLVEEGLWDDPVALLVARHYLEDAPKDLEALILGCTHYPFLKGAIGAVLPGVALLDSAELTAQEVARALEAEGLLNPEGRGRTFHLVTGDPEAYRALAERLGERVEAVRRVSLEEL.

Substrate-binding positions include 12-13 (DS) and 44-45 (YG). Cys75 acts as the Proton donor/acceptor in catalysis. 76 to 77 (NT) serves as a coordination point for substrate. Cys176 serves as the catalytic Proton donor/acceptor. 177-178 (TH) provides a ligand contact to substrate.

Belongs to the aspartate/glutamate racemases family.

It carries out the reaction L-glutamate = D-glutamate. The protein operates within cell wall biogenesis; peptidoglycan biosynthesis. Provides the (R)-glutamate required for cell wall biosynthesis. The protein is Glutamate racemase of Thermus thermophilus (strain ATCC 27634 / DSM 579 / HB8).